A 159-amino-acid chain; its full sequence is Phosphopantetheine adenylyltransferase (159 aa).

Threonine 10 is a binding site for substrate. ATP-binding positions include 10–11 (TF) and histidine 18. The substrate site is built by lysine 42, methionine 74, and arginine 88. ATP contacts are provided by residues 89-91 (GLR), glutamate 99, and 124-130 (WSFISSS).

This sequence belongs to the bacterial CoaD family. As to quaternary structure, homohexamer. It depends on Mg(2+) as a cofactor.

It localises to the cytoplasm. The catalysed reaction is (R)-4'-phosphopantetheine + ATP + H(+) = 3'-dephospho-CoA + diphosphate. It functions in the pathway cofactor biosynthesis; coenzyme A biosynthesis; CoA from (R)-pantothenate: step 4/5. Reversibly transfers an adenylyl group from ATP to 4'-phosphopantetheine, yielding dephospho-CoA (dPCoA) and pyrophosphate. The sequence is that of Phosphopantetheine adenylyltransferase from Escherichia coli O7:K1 (strain IAI39 / ExPEC).